The following is a 280-amino-acid chain: Undecaprenyl-diphosphatase (280 aa).

Helical transmembrane passes span 19–39, 44–64, 89–109, 125–145, 156–176, 197–217, 226–246, and 259–279; these read FLPVSSTGHLFLFSSFFPFSG, FDDLFDIFIQSGAILSVLFLY, FYFLVQIVIGAFPILVVGFIA, ILASAWIFGGVLILIAEWFFQ, VGFRDAILIGIFQCVALIPGV, AEFSFFLAVPVLLAAGIYKLI, VTIPILAFGFLISFLLCTLVI, and GVFGIYRILLGVGVLVFTKFI.

The protein belongs to the UppP family.

The protein localises to the cell inner membrane. It carries out the reaction di-trans,octa-cis-undecaprenyl diphosphate + H2O = di-trans,octa-cis-undecaprenyl phosphate + phosphate + H(+). In terms of biological role, catalyzes the dephosphorylation of undecaprenyl diphosphate (UPP). Confers resistance to bacitracin. The chain is Undecaprenyl-diphosphatase from Leptospira borgpetersenii serovar Hardjo-bovis (strain L550).